Reading from the N-terminus, the 151-residue chain is Large ribosomal subunit protein bL9 (151 aa).

The protein belongs to the bacterial ribosomal protein bL9 family.

Functionally, binds to the 23S rRNA. This is Large ribosomal subunit protein bL9 from Dehalococcoides mccartyi (strain ATCC BAA-2100 / JCM 16839 / KCTC 5957 / BAV1).